A 448-amino-acid chain; its full sequence is Probable glycine dehydrogenase (decarboxylating) subunit 1 (448 aa).

It belongs to the GcvP family. N-terminal subunit subfamily. As to quaternary structure, the glycine cleavage system is composed of four proteins: P, T, L and H. In this organism, the P 'protein' is a heterodimer of two subunits.

It carries out the reaction N(6)-[(R)-lipoyl]-L-lysyl-[glycine-cleavage complex H protein] + glycine + H(+) = N(6)-[(R)-S(8)-aminomethyldihydrolipoyl]-L-lysyl-[glycine-cleavage complex H protein] + CO2. The glycine cleavage system catalyzes the degradation of glycine. The P protein binds the alpha-amino group of glycine through its pyridoxal phosphate cofactor; CO(2) is released and the remaining methylamine moiety is then transferred to the lipoamide cofactor of the H protein. The chain is Probable glycine dehydrogenase (decarboxylating) subunit 1 from Lysinibacillus sphaericus (strain C3-41).